A 142-amino-acid polypeptide reads, in one-letter code: Small ribosomal subunit protein uS12z (142 aa).

P61 is subject to Hydroxyproline.

This sequence belongs to the universal ribosomal protein uS12 family.

In Arabidopsis thaliana (Mouse-ear cress), this protein is Small ribosomal subunit protein uS12z (RPS23A).